The sequence spans 118 residues: Large ribosomal subunit protein uL18 (118 aa).

Belongs to the universal ribosomal protein uL18 family. Part of the 50S ribosomal subunit; part of the 5S rRNA/L5/L18/L25 subcomplex. Contacts the 5S and 23S rRNAs.

Functionally, this is one of the proteins that bind and probably mediate the attachment of the 5S RNA into the large ribosomal subunit, where it forms part of the central protuberance. The chain is Large ribosomal subunit protein uL18 from Rickettsia peacockii (strain Rustic).